Consider the following 799-residue polypeptide: Integrin beta-1 (799 aa).

Residues 1–20 form the signal peptide; that stretch reads MNLQLVFWIGLISLICSVFG. The Extracellular segment spans residues 21–729; that stretch reads QTDKNRCLKA…ETPDCPTGPD (709 aa). Residues 26–76 enclose the PSI domain; sequence RCLKANAKSCGECIQAGPNCGWCTNTTFLQEGMPTSARCDDLEALKKKGCH. 28 disulfides stabilise this stretch: Cys-27–Cys-45, Cys-35–Cys-465, Cys-38–Cys-64, Cys-48–Cys-75, Cys-207–Cys-213, Cys-261–Cys-301, Cys-401–Cys-415, Cys-435–Cys-463, Cys-467–Cys-487, Cys-478–Cys-490, Cys-492–Cys-501, Cys-503–Cys-534, Cys-517–Cys-532, Cys-526–Cys-537, Cys-539–Cys-554, Cys-556–Cys-577, Cys-561–Cys-575, Cys-569–Cys-580, Cys-582–Cys-591, Cys-593–Cys-616, Cys-600–Cys-614, Cys-608–Cys-619, Cys-621–Cys-631, Cys-634–Cys-637, Cys-641–Cys-692, Cys-647–Cys-666, Cys-650–Cys-662, and Cys-700–Cys-724. Residues Asn-50, Asn-94, and Asn-97 are each glycosylated (N-linked (GlcNAc...) asparagine). A VWFA domain is found at 140–378; sequence DYPIDLYYLM…QLIIDAYNSL (239 aa). Residues Ser-152 and Ser-154 each coordinate Mg(2+). 4 residues coordinate Ca(2+): Ser-154, Asp-157, Asp-158, and Glu-189. Positions 207–213 are CX3CL1-binding; it reads CTSEQNC. Residue Asn-212 is glycosylated (N-linked (GlcNAc...) asparagine). Residues Asn-244, Asp-246, Pro-248, and Glu-249 each coordinate Ca(2+). Glu-249 lines the Mg(2+) pocket. Residue Asn-269 is glycosylated (N-linked (GlcNAc...) asparagine). The CX3CL1-binding stretch occupies residues 295–314; sequence LPNDGQCHLENNVYTMSHYY. Residue Gly-362 coordinates Ca(2+). Residues Asn-363, Asn-406, and Asn-417 are each glycosylated (N-linked (GlcNAc...) asparagine). The tract at residues 383–466 is interaction with TMEM182; sequence ILENSKLPDG…VVLQFICKCN (84 aa). 4 I-EGF domains span residues 467 to 502, 503 to 555, 556 to 592, and 593 to 632; these read CQSHGIPASPKCHEGNGTFECGACRCNEGRVGRHCE, CSTD…KFCE, CDNFNCDRSNGLICGGNGVCRCRVCECYPNYTGSACD, and CSLDTVPCVATNGQICNGRGICECGACKCTDPKFQGPTCE. A glycan (N-linked (GlcNAc...) asparagine) is linked at Asn-482. Asn-521 carries an N-linked (GlcNAc...) asparagine glycan. N-linked (GlcNAc...) asparagine glycosylation occurs at Asn-585. N-linked (GlcNAc...) asparagine glycosylation occurs at Asn-670. The chain crosses the membrane as a helical span at residues 730 to 752; the sequence is IIPIVAGVVAGIVLIGLALLLIW. Residues 753–799 are Cytoplasmic-facing; that stretch reads KLLMIIHDRREFAKFEKEKMNAKWDTGENPIYKSAVTTVVNPKYEGK. The interval 763–768 is signal for sorting from recycling endosomes; interaction with ACAP1; the sequence is EFAKFE. Position 778 is a phosphothreonine (Thr-778). Residue Tyr-784 is modified to Phosphotyrosine. Ser-786 carries the phosphoserine modification. Positions 786-793 are interaction with ITGB1BP1; sequence SAVTTVVN. Thr-790 is modified (phosphothreonine). Lys-795 bears the N6-acetyllysine; alternate mark. Lys-795 is covalently cross-linked (Glycyl lysine isopeptide (Lys-Gly) (interchain with G-Cter in SUMO1); alternate).

It belongs to the integrin beta chain family. As to quaternary structure, interacts with seprase FAP (seprase); the interaction occurs at the cell surface of invadopodia membrane in a collagen-dependent manner. Heterodimer of an alpha and a beta subunit. Beta-1 associates with either alpha-1, alpha-2, alpha-3, alpha-4, alpha-5, alpha-6, alpha-7, alpha-8, alpha-9, alpha-10, alpha-11 or alpha-V. ITGA6:ITGB1 is found in a complex with CD9; interaction takes place in oocytes and is involved in sperm-egg fusion. Binds LGALS3BP and NMRK2, when associated with alpha-7, but not with alpha-5. Interacts with FLNA, FLNB, FLNC and RANBP9. Interacts with KRT1 in the presence of RACK1 and SRC. Interacts with JAML; integrin alpha-4/beta-1 may regulate leukocyte to endothelial cells adhesion by controlling JAML homodimerization. Interacts with RAB21. Interacts (via the cytoplasmic region) with RAB25 (via the hypervariable C-terminal region). Interacts with MYO10. Interacts with ITGB1BP1 (via C-terminal region); the interaction is a prerequisite for focal adhesion disassembly. Interacts with TLN1; the interaction is prevented by competitive binding of ITGB1BP1. Interacts with ACAP1; required for ITGB1 recycling. Interacts with ASAP3. Interacts with FERMT2; the interaction is inhibited in presence of ITGB1BP1. Interacts with DAB2. Interacts with FGR and HCK. Interacts with alpha-7A and alpha-7B in adult skeletal muscle. Interacts with alpha-7B in cardiomyocytes of adult heart. Interacts with EMP2; the interaction may be direct or indirect and ITGB1 has a heterodimer form. ITGA5:ITGB1 interacts with CCN3. ITGA4:ITGB1 is found in a ternary complex with CX3CR1 and CX3CL1. ITGA5:ITGB1 interacts with FBN1. ITGA5:ITGB1 acts as a receptor for fibronectin FN1 and mediates R-G-D-dependent cell adhesion to FN1. ITGA5:ITGB1 interacts with IL1B. Interacts with MDK. ITGA4:ITGB1 interacts with MDK; this interaction mediates MDK-induced osteoblast cells migration through PXN phosphorylation. ITGA6:ITGB1 interacts with MDK; this interaction mediates MDK-induced neurite-outgrowth. ITGA5:ITGB1 interacts with ACE2. Interacts with TMEM182 and LAMB1. Interacts with tensin TNS3; TNS3 also interacts with PEAK1, thus acting as an adapter molecule to bridge the association of PEAK1 with ITGB1. Interacts with tensin TNS4; the interaction displaces tensin TNS3 from the ITGB1 cytoplasmic tail and promotes ITGB1 stability. Integrin ITGA9:ITGB1 interacts with SPP1/OPN (via N-terminus). Integrin ITGA9:ITGB1 interacts with TNC/TNFN3 (via the 3rd Fibronectin type-III domain). Integrins ITGA4:ITGB1 and ITGA9:ITGB1 interact with SVEP1 (via Sushi domain 21); thereby inhibit Ca(2+) intracellular signaling and as a result repress vasocontraction. ITGA4:ITGB1 and ITGA5:ITGB1 interacts with SELP. ITGA5:ITGB1 interacts with IGFBP1. ITGA4:ITGB1 interacts with BCAM. Interacts with ADGRG6.

The protein localises to the cell membrane. The protein resides in the cell projection. It localises to the invadopodium membrane. Its subcellular location is the ruffle membrane. It is found in the recycling endosome. The protein localises to the melanosome. The protein resides in the lamellipodium. It localises to the ruffle. Its subcellular location is the cell junction. It is found in the focal adhesion. Functionally, integrins alpha-1/beta-1, alpha-2/beta-1, alpha-10/beta-1 and alpha-11/beta-1 are receptors for collagen. Integrins alpha-1/beta-1 and alpha-2/beta-2 recognize the proline-hydroxylated sequence G-F-P-G-E-R in collagen. Integrins alpha-2/beta-1, alpha-3/beta-1, alpha-4/beta-1, alpha-5/beta-1, alpha-8/beta-1, alpha-10/beta-1, alpha-11/beta-1 and alpha-V/beta-1 are receptors for fibronectin. Alpha-4/beta-1 recognizes one or more domains within the alternatively spliced CS-1 and CS-5 regions of fibronectin. Integrin alpha-5/beta-1 is a receptor for fibrinogen. Integrin alpha-1/beta-1, alpha-2/beta-1, alpha-6/beta-1 and alpha-7/beta-1 are receptors for lamimin. Integrin alpha-6/beta-1 (ITGA6:ITGB1) is present in oocytes and is involved in sperm-egg fusion. Integrin alpha-4/beta-1 is a receptor for VCAM1 and recognizes the sequence Q-I-D-S in VCAM1. Integrin alpha-9/beta-1 is a receptor for VCAM1, cytotactin and osteopontin. It recognizes the sequence A-E-I-D-G-I-E-L in cytotactin. Integrin alpha-3/beta-1 is a receptor for epiligrin, thrombospondin and CSPG4. Integrin alpha-3/beta-1 provides a docking site for FAP (seprase) at invadopodia plasma membranes in a collagen-dependent manner and hence may participate in the adhesion, formation of invadopodia and matrix degradation processes, promoting cell invasion. Alpha-3/beta-1 may mediate with LGALS3 the stimulation by CSPG4 of endothelial cells migration. Integrin alpha-V/beta-1 is a receptor for vitronectin. Beta-1 integrins recognize the sequence R-G-D in a wide array of ligands. When associated with alpha-7/beta-1 integrin, regulates cell adhesion and laminin matrix deposition. Involved in promoting endothelial cell motility and angiogenesis. Involved in osteoblast compaction through the fibronectin fibrillogenesis cell-mediated matrix assembly process and the formation of mineralized bone nodules. May be involved in up-regulation of the activity of kinases such as PKC via binding to KRT1. Together with KRT1 and RACK1, serves as a platform for SRC activation or inactivation. Plays a mechanistic adhesive role during telophase, required for the successful completion of cytokinesis. ITGA4:ITGB1 binds to fractalkine (CX3CL1) and may act as its coreceptor in CX3CR1-dependent fractalkine signaling. ITGA4:ITGB1 and ITGA5:ITGB1 bind to PLA2G2A via a site (site 2) which is distinct from the classical ligand-binding site (site 1) and this induces integrin conformational changes and enhanced ligand binding to site 1. ITGA5:ITGB1 acts as a receptor for fibrillin-1 (FBN1) and mediates R-G-D-dependent cell adhesion to FBN1. ITGA5:ITGB1 is a receptor for IL1B and binding is essential for IL1B signaling. ITGA5:ITGB3 is a receptor for soluble CD40LG and is required for CD40/CD40LG signaling. Plays an important role in myoblast differentiation and fusion during skeletal myogenesis. ITGA9:ITGB1 may play a crucial role in SVEP1/polydom-mediated myoblast cell adhesion. Integrins ITGA9:ITGB1 and ITGA4:ITGB1 repress PRKCA-mediated L-type voltage-gated channel Ca(2+) influx and ROCK-mediated calcium sensitivity in vascular smooth muscle cells via their interaction with SVEP1, thereby inhibit vasocontraction. The polypeptide is Integrin beta-1 (Itgb1) (Rattus norvegicus (Rat)).